The following is a 1031-amino-acid chain: Semaphorin-6A (1031 aa).

The N-terminal stretch at 1–18 (MRPAALLLCLTLLHCAGA) is a signal peptide. The Extracellular portion of the chain corresponds to 19–649 (GFPEDSEPIS…KSNDQLVPVT (631 aa)). The region spanning 24-512 (SEPISISHGN…FSTCVIKVPL (489 aa)) is the Sema domain. Residues Asn33, Asn49, and Asn65 are each glycosylated (N-linked (GlcNAc...) asparagine). Intrachain disulfides connect Cys107–Cys117, Cys135–Cys144, Cys258–Cys369, and Cys283–Cys328. An N-linked (GlcNAc...) asparagine glycan is attached at Asn282. Asn434 and Asn461 each carry an N-linked (GlcNAc...) asparagine glycan. 4 disulfides stabilise this stretch: Cys477/Cys506, Cys515/Cys533, Cys521/Cys568, and Cys525/Cys542. The chain crosses the membrane as a helical span at residues 650–670 (LLAIAVILAFVMGAVFSGIIV). The Cytoplasmic segment spans residues 671 to 1031 (YCVCDHRRKD…TSMKPNDACT (361 aa)). At Ser698 the chain carries Phosphoserine. Disordered stretches follow at residues 754-777 (ALPT…SREW), 861-902 (SSKS…TGLS), and 914-1031 (GLEY…DACT). The span at 921–931 (YPTNSLTRSHQ) shows a compositional bias: polar residues. The span at 932–951 (TTTLKRNNTNSSNSSHLSRN) shows a compositional bias: low complexity. Ser953 carries the phosphoserine modification. 2 stretches are compositionally biased toward polar residues: residues 971-998 (QVHS…SLTR) and 1019-1031 (PLST…DACT).

It belongs to the semaphorin family. Active as a homodimer or oligomer. The SEMA6A homodimer interacts with a PLXNA2 homodimer, giving rise to a heterotetramer. Interacts with EVL. Particularly high levels in spinal cord, cerebellum, metencephalon, superior and inferior colliculus, diencephalon, olfactory bulb and eye.

It localises to the cell membrane. Its function is as follows. Cell surface receptor for PLXNA2 that plays an important role in cell-cell signaling. Required for normal granule cell migration in the developing cerebellum. Promotes reorganization of the actin cytoskeleton and plays an important role in axon guidance in the developing central nervous system. Can act as repulsive axon guidance cue. Has repulsive action towards migrating granular neurons. May play a role in channeling sympathetic axons into the sympathetic chains and controlling the temporal sequence of sympathetic target innervation. The sequence is that of Semaphorin-6A (Sema6a) from Mus musculus (Mouse).